Consider the following 319-residue polypeptide: Guanosine ABC transporter permease protein NupQ (319 aa).

The next 9 helical transmembrane spans lie at 6–26 (ILSI…LTAL), 39–59 (IGLE…NLFF), 65–85 (AAAP…FSLI), 99–119 (VSGV…VKLI), 159–179 (ILAI…PFGL), 204–224 (IGVM…ASTI), 235–255 (GQGF…IGAL), 257–277 (AALF…LPLF), and 282–302 (NVYM…GFIG).

This sequence belongs to the binding-protein-dependent transport system permease family. In terms of assembly, the complex is composed of two ATP-binding proteins (NupO), two transmembrane proteins (NupP and NupQ) and a solute-binding protein (NupN).

Its subcellular location is the cell membrane. Its function is as follows. Part of an ABC transporter complex involved in the uptake of guanosine. Responsible for the translocation of the substrate across the membrane. May be a nucleoside transporter of broad specificity but with various affinities for different substrates. This chain is Guanosine ABC transporter permease protein NupQ, found in Bacillus subtilis (strain 168).